Here is a 44-residue protein sequence, read N- to C-terminus: Photosystem I reaction center subunit IX (44 aa).

A helical membrane pass occupies residues 7-27 (YLSVAPVASTLWFVALAGLLI).

The protein belongs to the PsaJ family.

The protein resides in the plastid. It is found in the chloroplast thylakoid membrane. In terms of biological role, may help in the organization of the PsaE and PsaF subunits. The sequence is that of Photosystem I reaction center subunit IX from Cicer arietinum (Chickpea).